Consider the following 219-residue polypeptide: Mediator of RNA polymerase II transcription subunit 18 (219 aa).

The protein belongs to the Mediator complex subunit 18 family. In terms of assembly, component of the Mediator complex. Interacts with YY1 to suppress disease susceptibility via the repression of genes glutaredoxins GRX480, GRXS13 and thioredoxin TRX-h5. Binds to ABI4 to regulate abscisic acid responses; recruited by ABI4 to ABI5 promoter in the presence of abscisic acid (ABA). Interacts with SUF4 to regulate flowering time; recruited by SUF4 to FLC promoter.

The protein resides in the nucleus. In terms of biological role, component of the Mediator complex, a coactivator involved in the regulated transcription of nearly all RNA polymerase II-dependent genes. Mediator functions as a bridge to convey information from gene-specific regulatory proteins to the basal RNA polymerase II transcription machinery. The Mediator complex, having a compact conformation in its free form, is recruited to promoters by direct interactions with regulatory proteins and serves for the assembly of a functional pre-initiation complex with RNA polymerase II and the general transcription factors. Involved in the regulation of histone H3 lysine tri-methylation (H3K36me3). Associates with the promoter, coding and terminator regions of target genes suggesting its function in transcription initiation, elongation and termination. Multifunctional protein which regulates plant immunity, especially during necrotrophic fungal infection (e.g. B.cinerea and A.brassicicola), flowering time and responses to hormones (e.g. abscisic acid ABA and ethylene) through interactions with distinct transcription factors. The protein is Mediator of RNA polymerase II transcription subunit 18 of Arabidopsis thaliana (Mouse-ear cress).